The primary structure comprises 963 residues: Importin-13 (963 aa).

HEAT repeat units lie at residues 24–54, 56–88, 95–135, 142–179, 194–231, 236–268, 276–325, 330–372, 375–438, 440–476, 487–522, 524–558, 562–600, 603–648, 676–716, 720–754, 761–803, 815–845, 860–893, and 897–931; these read ENVEKALHQLYYDPNIDNKNLAQKWLMQAQV, PQAWHFSWQLLQPDKVPEIQYFGASALHIKISR, TDQY…LSMM, AVADMVRLFQAEDSPVDSQGRCLALLELLTVLPEEFQT, LAVECGTVFPLLEQLLQQPSSPSCVRQKVLKCFSSWVQ, LQDCEALIQAAFAALQDSELFDSSVEAIVNAIS, VNTL…ALLD, WQSF…DDIL, EAEK…YEML, AELLSNLYDKLGRLLTSSEEPYSWQHTEALLYGFQSI, VVPGLIGLIPRISISNVQLADTVMFTIGALSEWLAD, PVMINSVLPLVLHALGNPELSVSSVSTLKKICREC, LPPYAANIVAVSQDVLMKQIHKTSQCMWLMQALGFLLSA, VEEI…SNLF, PVVV…VKTL, FAPMVPQLCEMLGRMYSTVPQASALDLTRQLVHIF, FPPI…ALKR, VKAVFQCAVLALKFPEAPTVKASCGFFTELL, EDGRMLLIAVLEAIGGQASRSLMDCFADILFALN, and FSLLSMWIKEALQPPGFPSARLSPEQKDTFSQQIL. Residues 45–111 form the Importin N-terminal domain; that stretch reads AQKWLMQAQV…KAQLFTQITR (67 aa).

The protein belongs to the importin beta family. As to quaternary structure, interacts with UBC9, RAN, RBM8A, eIF-1A and PAX6.

The protein localises to the cytoplasm. The protein resides in the nucleus. Functions in nuclear protein import as nuclear transport receptor. Serves as receptor for nuclear localization signals (NLS) in cargo substrates. Is thought to mediate docking of the importin/substrate complex to the nuclear pore complex (NPC) through binding to nucleoporin and the complex is subsequently translocated through the pore by an energy requiring, Ran-dependent mechanism. At the nucleoplasmic side of the NPC, Ran binds to the importin, the importin/substrate complex dissociates and importin is re-exported from the nucleus to the cytoplasm where GTP hydrolysis releases Ran. The directionality of nuclear import is thought to be conferred by an asymmetric distribution of the GTP- and GDP-bound forms of Ran between the cytoplasm and nucleus. Mediates the nuclear import of UBC9, the RBM8A/MAGOH complex, PAX6 and probably other members of the paired homeobox family. Also mediates nuclear export of eIF-1A, and the cytoplasmic release of eIF-1A is triggered by the loading of import substrates onto IPO13. This chain is Importin-13 (Ipo13), found in Mus musculus (Mouse).